A 139-amino-acid polypeptide reads, in one-letter code: Invertebrate-type lysozyme 2 (139 aa).

The signal sequence occupies residues 1 to 18; the sequence is MFVKAILLLSIAVAYASA. Positions 19 to 138 constitute an I-type lysozyme domain; the sequence is DCLHCICMRE…WKGVHSCCGC (120 aa). Disulfide bonds link Cys20–Cys106, Cys23–Cys138, Cys25–Cys31, Cys36–Cys45, Cys58–Cys86, Cys76–Cys82, and Cys98–Cys120. Catalysis depends on Glu28, which acts as the Proton donor. Asp39 serves as the catalytic Nucleophile. 51–57 provides a ligand contact to substrate; sequence KIPYYED. Substrate-binding positions include Tyr90 and 113-115; that span reads HNG.

Belongs to the glycosyl hydrolase 22 family. Type-I lysozyme subfamily. As to expression, expressed in pharyngeal muscle cell pm3, nerve ring and intestine.

It carries out the reaction Hydrolysis of (1-&gt;4)-beta-linkages between N-acetylmuramic acid and N-acetyl-D-glucosamine residues in a peptidoglycan and between N-acetyl-D-glucosamine residues in chitodextrins.. In terms of biological role, has bacteriolytic activity against Gram-positive bacteria. May play a role in resistance to Gram-positive bacterium S.aureus infection. This Caenorhabditis elegans protein is Invertebrate-type lysozyme 2.